Here is a 205-residue protein sequence, read N- to C-terminus: Small ribosomal subunit protein uS4 (205 aa).

The interval 18–46 is disordered; the sequence is NIWGRPKSPVNRREYGPGQHGQRRKGKLS. Positions 94–157 constitute an S4 RNA-binding domain; it reads RRLDTVVFRA…KQLAIVLEAT (64 aa).

The protein belongs to the universal ribosomal protein uS4 family. Part of the 30S ribosomal subunit. Contacts protein S5. The interaction surface between S4 and S5 is involved in control of translational fidelity.

Functionally, one of the primary rRNA binding proteins, it binds directly to 16S rRNA where it nucleates assembly of the body of the 30S subunit. In terms of biological role, with S5 and S12 plays an important role in translational accuracy. The sequence is that of Small ribosomal subunit protein uS4 from Bradyrhizobium sp. (strain BTAi1 / ATCC BAA-1182).